Consider the following 372-residue polypeptide: MEPVPCLLLLLLPLLRASTDTPEPCELDDDDIRCVCNFSDPQPDWSSALQCMPAVQVEMWGGGHSLEQFLRQADLYTDQRRYADVVKALRVRRLTVGAVQVPAPLLLGVLRVLGYSRLKELALEDIEVTGTAPPPPPLEATGPALSTLSLRNVSWPKGGAWLSELQQWLKPGLQVLNIAQAHTLAFSCEQVRTFSALTTLDLSENPGLGERGLVAALCPHKFPALQDLALRNAGMKTLQGVCAALAEAGVQPHHLDLSHNSLRADTQRCIWPSALNSLNLSFTGLQQVPKGLPAKLNVLDLSCNKLNRAPQPGELPKVVNLSLDGNPFLVPGASKLQEDLTNSGVFPACPPSPLAMGMSGTLALLQGARGFI.

The N-terminal stretch at 1–17 is a signal peptide; sequence MEPVPCLLLLLLPLLRA. Cystine bridges form between Cys25/Cys36 and Cys34/Cys51. Residue Asn37 is glycosylated (N-linked (GlcNAc...) asparagine). LRR repeat units follow at residues 54-82, 83-118, 119-145, 146-173, 174-197, 198-225, 226-252, 253-275, 276-296, 297-318, and 319-346; these read AVQV…QRRY, ADVV…YSRL, KELA…GPAL, STLS…KPGL, QVLN…FSAL, TTLD…FPAL, QDLA…GVQP, HHLD…PSAL, NSLN…PAKL, NVLD…LPKV, and VNLS…SGVF. Asn152 is a glycosylation site (N-linked (GlcNAc...) asparagine). Cystine bridges form between Cys188–Cys218 and Cys242–Cys269. The N-linked (GlcNAc...) asparagine glycan is linked to Asn279. Residues 287-372 form a required for response to bacterial lipopolysaccharide (LPS) region; that stretch reads QVPKGLPAKL…ALLQGARGFI (86 aa). A glycan (N-linked (GlcNAc...) asparagine) is linked at Asn320. Asn342 carries the GPI-anchor amidated asparagine lipid modification. Residues 343–372 constitute a propeptide, removed in mature form; sequence SGVFPACPPSPLAMGMSGTLALLQGARGFI.

Belongs to the lipopolysaccharide (LPS) receptor, a multi-protein complex containing at least CD14, LY96 and TLR4. Interacts with LPS-bound LPB. Interacts with LPAR1. Interacts with the TLR2:TLR6 or TLR2:TLR1 heterodimers; upon interaction with ligands such as diacylated lipopeptides and triacylated lipopeptides, respectively. Interacts with MYO18A. Interacts with FSTL1.

It is found in the cell membrane. The protein localises to the secreted. Its subcellular location is the membrane raft. It localises to the golgi apparatus. Functionally, coreceptor for bacterial lipopolysaccharide. In concert with LBP, binds to monomeric lipopolysaccharide and delivers it to the LY96/TLR4 complex, thereby mediating the innate immune response to bacterial lipopolysaccharide (LPS). Acts via MyD88, TIRAP and TRAF6, leading to NF-kappa-B activation, cytokine secretion and the inflammatory response. Acts as a coreceptor for TLR2:TLR6 heterodimer in response to diacylated lipopeptides and for TLR2:TLR1 heterodimer in response to triacylated lipopeptides, these clusters trigger signaling from the cell surface and subsequently are targeted to the Golgi in a lipid-raft dependent pathway. Binds electronegative LDL (LDL(-)) and mediates the cytokine release induced by LDL(-). The protein is Monocyte differentiation antigen CD14 (CD14) of Oryctolagus cuniculus (Rabbit).